The sequence spans 296 residues: Protein RarD (296 aa).

The Cytoplasmic segment spans residues methionine 1–leucine 11. Residues leucine 12–proline 34 form a helical membrane-spanning segment. The region spanning phenylalanine 18–tryptophan 145 is the EamA domain. Topologically, residues alanine 35–glutamate 37 are periplasmic. The chain crosses the membrane as a helical span at residues isoleucine 38 to tryptophan 60. Over serine 61–lysine 72 the chain is Cytoplasmic. A helical membrane pass occupies residues isoleucine 73–asparagine 95. Residues asparagine 96 to methionine 99 lie on the Periplasmic side of the membrane. Residues leucine 100 to glycine 122 traverse the membrane as a helical segment. Over glutamate 123–methionine 128 the chain is Cytoplasmic. Residues glutamine 129 to threonine 146 form a helical membrane-spanning segment. Residues phenylalanine 147–serine 149 are Periplasmic-facing. The chain crosses the membrane as a helical span at residues leucine 150–valine 167. Residues arginine 168–methionine 179 are Cytoplasmic-facing. The chain crosses the membrane as a helical span at residues leucine 180–isoleucine 197. Over alanine 198–serine 211 the chain is Periplasmic. Residues leucine 212–alanine 234 traverse the membrane as a helical segment. The Cytoplasmic segment spans residues threonine 235–arginine 238. The helical transmembrane segment at leucine 239–tyrosine 261 threads the bilayer. The Periplasmic segment spans residues glycine 262–methionine 270. A helical membrane pass occupies residues valine 271 to threonine 290. Residues glutamine 291–lysine 296 are Cytoplasmic-facing.

The protein belongs to the EamA transporter family.

Its subcellular location is the cell inner membrane. This is Protein RarD (rarD) from Escherichia coli (strain K12).